A 352-amino-acid chain; its full sequence is E3 ubiquitin-protein ligase RNF146 (352 aa).

The RING-type zinc-finger motif lies at 36–74 (CAICLQTCVHPVSLPCKHVFCYLCVKGASWLGKRCALCR). Glycyl lysine isopeptide (Lys-Gly) (interchain with G-Cter in ubiquitin) cross-links involve residues Lys84 and Lys94. The WWE domain occupies 91-167 (EELKAASRGN…EHGRRRKIKR (77 aa)). A glycoprotein-binding residues include Tyr107, Arg110, and Trp114. A Glycyl lysine isopeptide (Lys-Gly) (interchain with G-Cter in ubiquitin) cross-link involves residue Lys130. Positions 144, 153, 163, and 175 each coordinate a glycoprotein. A Glycyl lysine isopeptide (Lys-Gly) (interchain with G-Cter in ubiquitin) cross-link involves residue Lys175. Disordered regions lie at residues 195–242 (SSAD…AGAS), 259–293 (ERSH…ASSD), and 317–352 (NQTV…VTEV). Positions 197–210 (ADGADSGSAHTGAS) are enriched in low complexity. A compositionally biased stretch (polar residues) spans 215–233 (VPSSTRPLTSVDGQLTSPV). Residues 282 to 293 (STEETESDASSD) are compositionally biased toward acidic residues. 2 positions are modified to phosphoserine: Ser288 and Ser292.

As to quaternary structure, can form homooligomers. Interacts with PARsylated AXIN1, AXIN2, BLZF1, CASC3, H1-2, IPO7, LIG3, NCL, PARP1, XRCC1, XRCC5 and XRCC6. Interacts with DDB1, DHX15, IQGAP1, LRPPRC, PARP2, PRKDC, RUVBL2, TNKS1 and TNKS2. Binding often leads to interactor ubiquitination, in the presence of the appropriate E1 and E2 enzymes, and proteasomal degradation. In terms of processing, ubiquitinated; autoubiquitinated. Autoubiquitination is enhanced upon poly(ADP-ribose)-binding.

Its subcellular location is the cytoplasm. The protein resides in the cytosol. It localises to the nucleus. The catalysed reaction is S-ubiquitinyl-[E2 ubiquitin-conjugating enzyme]-L-cysteine + [acceptor protein]-L-lysine = [E2 ubiquitin-conjugating enzyme]-L-cysteine + N(6)-ubiquitinyl-[acceptor protein]-L-lysine.. The protein operates within protein modification; protein ubiquitination. In terms of biological role, E3 ubiquitin-protein ligase that specifically binds poly-ADP-ribosylated (PARsylated) proteins and mediates their ubiquitination and subsequent degradation. May regulate many important biological processes, such as cell survival and DNA damage response. Acts as an activator of the Wnt signaling pathway by mediating the ubiquitination of PARsylated AXIN1 and AXIN2, 2 key components of the beta-catenin destruction complex. Acts in cooperation with tankyrase proteins (TNKS and TNKS2), which mediate PARsylation of target proteins AXIN1, AXIN2, BLZF1, CASC3, TNKS and TNKS2. Recognizes and binds tankyrase-dependent PARsylated proteins via its WWE domain and mediates their ubiquitination, leading to their degradation. Different ubiquitin linkage types have been observed: TNKS2 undergoes ubiquitination at 'Lys-48' and 'Lys-63', while AXIN1 is only ubiquitinated at 'Lys-48'. May regulate TNKS and TNKS2 subcellular location, preventing aggregation at a centrosomal location. Neuroprotective protein. Protects the brain against N-methyl-D-aspartate (NMDA) receptor-mediated glutamate excitotoxicity and ischemia, by interfering with PAR-induced cell death, called parthanatos. Prevents nuclear translocation of AIFM1 in a PAR-binding dependent manner. Does not affect PARP1 activation. Protects against cell death induced by DNA damaging agents, such as N-methyl-N-nitro-N-nitrosoguanidine (MNNG) and rescues cells from G1 arrest. Promotes cell survival after gamma-irradiation. Facilitates DNA repair. This chain is E3 ubiquitin-protein ligase RNF146 (Rnf146), found in Rattus norvegicus (Rat).